A 292-amino-acid chain; its full sequence is ATP synthase gamma chain (292 aa).

It belongs to the ATPase gamma chain family. As to quaternary structure, F-type ATPases have 2 components, CF(1) - the catalytic core - and CF(0) - the membrane proton channel. CF(1) has five subunits: alpha(3), beta(3), gamma(1), delta(1), epsilon(1). CF(0) has three main subunits: a, b and c.

It is found in the cell inner membrane. In terms of biological role, produces ATP from ADP in the presence of a proton gradient across the membrane. The gamma chain is believed to be important in regulating ATPase activity and the flow of protons through the CF(0) complex. The protein is ATP synthase gamma chain of Maridesulfovibrio salexigens (strain ATCC 14822 / DSM 2638 / NCIMB 8403 / VKM B-1763) (Desulfovibrio salexigens).